Reading from the N-terminus, the 267-residue chain is 4-hydroxy-tetrahydrodipicolinate reductase (267 aa).

NAD(+) contacts are provided by residues glycine 12–methionine 17, glycine 100–threonine 102, and alanine 126–phenylalanine 129. Histidine 156 serves as the catalytic Proton donor/acceptor. Histidine 157 is a (S)-2,3,4,5-tetrahydrodipicolinate binding site. The Proton donor role is filled by lysine 160. Glycine 166–threonine 167 contacts (S)-2,3,4,5-tetrahydrodipicolinate.

It belongs to the DapB family.

It localises to the cytoplasm. It catalyses the reaction (S)-2,3,4,5-tetrahydrodipicolinate + NAD(+) + H2O = (2S,4S)-4-hydroxy-2,3,4,5-tetrahydrodipicolinate + NADH + H(+). The enzyme catalyses (S)-2,3,4,5-tetrahydrodipicolinate + NADP(+) + H2O = (2S,4S)-4-hydroxy-2,3,4,5-tetrahydrodipicolinate + NADPH + H(+). It functions in the pathway amino-acid biosynthesis; L-lysine biosynthesis via DAP pathway; (S)-tetrahydrodipicolinate from L-aspartate: step 4/4. In terms of biological role, catalyzes the conversion of 4-hydroxy-tetrahydrodipicolinate (HTPA) to tetrahydrodipicolinate. In Bacillus velezensis (strain DSM 23117 / BGSC 10A6 / LMG 26770 / FZB42) (Bacillus amyloliquefaciens subsp. plantarum), this protein is 4-hydroxy-tetrahydrodipicolinate reductase.